Consider the following 81-residue polypeptide: Acyl carrier protein (81 aa).

One can recognise a Carrier domain in the interval 2–80 (SKVDNIEQKV…DVVNYIKEHK (79 aa)). Serine 40 is subject to O-(pantetheine 4'-phosphoryl)serine.

Belongs to the acyl carrier protein (ACP) family. In terms of processing, 4'-phosphopantetheine is transferred from CoA to a specific serine of apo-ACP by AcpS. This modification is essential for activity because fatty acids are bound in thioester linkage to the sulfhydryl of the prosthetic group.

The protein localises to the cytoplasm. Its pathway is lipid metabolism; fatty acid biosynthesis. Carrier of the growing fatty acid chain in fatty acid biosynthesis. This Rickettsia bellii (strain OSU 85-389) protein is Acyl carrier protein.